The following is a 49-amino-acid chain: Putative metallothionein MT1DP (49 aa).

Residues 1–29 are beta; that stretch reads MDLSCSCATGGSCTCASSCKCKEYKCTSC. Residues C5, C7, C13, C15, C19, C21, C26, C29, C33, C34, C36, C37, C41, C44, and C48 each coordinate a divalent metal cation. Residues 30–49 form an alpha region; the sequence is KKNCCSCCPMGCAKCAQGCT.

This sequence belongs to the metallothionein superfamily. Type 1 family.

In terms of biological role, metallothioneins have a high content of cysteine residues that bind various heavy metals. The polypeptide is Putative metallothionein MT1DP (MT1DP) (Homo sapiens (Human)).